A 299-amino-acid polypeptide reads, in one-letter code: Phosphatidylinositol-3-phosphatase (299 aa).

The N-terminal stretch at 1–43 (MLRGIQALSRPLTRVYRALAVIGVLAASLLASWVGAVPQVGLA) is a signal peptide.

Monomer. SapM interacts with host RAB7 via its C-terminus. A metal cation serves as cofactor.

It is found in the secreted. The protein resides in the host cytoplasmic vesicle. It localises to the host phagosome. It carries out the reaction a phosphate monoester + H2O = an alcohol + phosphate. The enzyme catalyses a 1,2-diacyl-sn-glycero-3-phospho-(1D-myo-inositol-3-phosphate) + H2O = a 1,2-diacyl-sn-glycero-3-phospho-(1D-myo-inositol) + phosphate. With respect to regulation, phosphatase activity is inhibited in vitro by low concentrations of several heavy metals (zinc chloride, sodium molybdate, magnesium chloride, and copper sulfate) and moderately high concentrations (&gt;8 mM) of EDTA. Its function is as follows. Virulence factor that plays an important role in blocking phagosome-lysosome fusion and thus participates in the intracellular survival of the pathogen. Acts as a phosphatase that dephosphorylates phosphatidylinositol 3-phosphate (PI3P), a membrane trafficking regulatory lipid essential for phagosomal acquisition of lysosomal constituents. Therefore, SapM eliminates PI3P from the phagosomal membrane by catalyzing its hydrolysis, and thus contributes to inhibition of phagosome maturation. Also interferes with autophagy: SapM blocks autophagosome-lysosome fusion in macrophages by binding to the small GTPase RAB7, which prevents RAB7 from being involved in this process and thus negatively regulates autophagy flux. In vitro, displays phosphatase activity with broad specificity; can dephosphorylate a variety of phosphoester substrates, with the highest activity against phosphoenolpyruvate, glycerophosphate, GTP, NADPH, phosphotyrosine and trehalose-6-phosphate. In contrast, the enzyme exhibits poor activity against glucose-6-phosphate, phosphothreonine, and a number of nucleotides (NADP, ATP, AMP, and GMP). This is Phosphatidylinositol-3-phosphatase from Mycobacterium tuberculosis (strain ATCC 25618 / H37Rv).